The following is a 586-amino-acid chain: Arginine--tRNA ligase (586 aa).

Residues 131-141 (ANPTGPMHVGH) carry the 'HIGH' region motif.

Belongs to the class-I aminoacyl-tRNA synthetase family. In terms of assembly, monomer.

The protein resides in the cytoplasm. It carries out the reaction tRNA(Arg) + L-arginine + ATP = L-arginyl-tRNA(Arg) + AMP + diphosphate. The polypeptide is Arginine--tRNA ligase (Azorhizobium caulinodans (strain ATCC 43989 / DSM 5975 / JCM 20966 / LMG 6465 / NBRC 14845 / NCIMB 13405 / ORS 571)).